A 638-amino-acid chain; its full sequence is MLLAQINRDSQGMTEFPGGGMEAQHVTLCLTEAVTVADGDNLENMEGVSLQAVTLADGSTAYIQHNSKDGRLIDGQVIQLEDGSAAYVQHVPIPKSTGDSLRLEDGQAVQLEDGTTAFIHHTSKDSYDQSSLQAVQLEDGTTAYIHHAVQVPQSDTILAIQADGTVAGLHTGDATIDPDTISALEQYAAKVSIDGSDGVTSTGMIGENEQEKKMQIVLQGHATRVTPKSQQSGEKAFRCKYDGCGKLYTTAHHLKVHERSHTGDRPYQCEHSGCGKAFATGYGLKSHFRTHTGEKPYRCSEDNCTKSFKTSGDLQKHIRTHTGERPFKCPIEGCGRSFTTSNIRKVHIRTHTGERPYYCTEPGCGRAFASATNYKNHVRIHTGEKPYVCTVPGCDKRFTEYSSLYKHHVVHTHSKPYNCNHCGKTYKQISTLAMHKRTAHNDTEPIEEEQEAFFEPPPGQGDDVLKGSQITYVTGVDGEDIVSTQVATVTQSGLSQQVTLISQDGTQHVNISQADMQAIGNTITMVTQDGTPITVPTHDAVISSAGTHSVAMVTAEGTEGQQVAIVAQDLAAFHTASSEMGHQQHSHHLVTTETRPLTLVATSNGTQIAVQLGEQPSLEEAIRIASRIQQGETPGLDD.

Methionine 1 is modified (N-acetylmethionine). Lysine 213 is covalently cross-linked (Glycyl lysine isopeptide (Lys-Gly) (interchain with G-Cter in SUMO2)). 4 C2H2-type zinc fingers span residues 237 to 261 (FRCKYDGCGKLYTTAHHLKVHERSH), 267 to 291 (YQCEHSGCGKAFATGYGLKSHFRTH), 297 to 321 (YRCSEDNCTKSFKTSGDLQKHIRTH), and 327 to 351 (FKCPIEGCGRSFTTSNIRKVHIRTH). The residue at position 352 (threonine 352) is a Phosphothreonine. C2H2-type zinc fingers lie at residues 357–381 (YYCTEPGCGRAFASATNYKNHVRIH), 387–411 (YVCTVPGCDKRFTEYSSLYKHHVVH), and 417–440 (YNCNHCGKTYKQISTLAMHKRTAH). Residue lysine 406 forms a Glycyl lysine isopeptide (Lys-Gly) (interchain with G-Cter in SUMO2) linkage.

This sequence belongs to the GLI C2H2-type zinc-finger protein family. Interacts with CHD8. Forms a complex with HCFC1 and ZNF143.

Its subcellular location is the nucleus. Transcriptional activator. Activates the gene for selenocysteine tRNA (tRNAsec). Binds to the SPH motif of small nuclear RNA (snRNA) gene promoters. Participates in efficient U6 RNA polymerase III transcription via its interaction with CHD8. In complex with HCFC1 and ZNF143, regulates the expression of several genes, including AP2S1, ESCO2, OPHN1, RBL1, UBXN8 and ZNF32. This is Zinc finger protein 143 (Znf143) from Mus musculus (Mouse).